A 486-amino-acid polypeptide reads, in one-letter code: Probable glycine dehydrogenase (decarboxylating) subunit 2 (486 aa).

The segment at 1 to 26 is disordered; sequence MLIFESSRPGRQARAQAPKPTAATND. K264 carries the post-translational modification N6-(pyridoxal phosphate)lysine.

The protein belongs to the GcvP family. C-terminal subunit subfamily. As to quaternary structure, the glycine cleavage system is composed of four proteins: P, T, L and H. In this organism, the P 'protein' is a heterodimer of two subunits. It depends on pyridoxal 5'-phosphate as a cofactor.

The catalysed reaction is N(6)-[(R)-lipoyl]-L-lysyl-[glycine-cleavage complex H protein] + glycine + H(+) = N(6)-[(R)-S(8)-aminomethyldihydrolipoyl]-L-lysyl-[glycine-cleavage complex H protein] + CO2. Functionally, the glycine cleavage system catalyzes the degradation of glycine. The P protein binds the alpha-amino group of glycine through its pyridoxal phosphate cofactor; CO(2) is released and the remaining methylamine moiety is then transferred to the lipoamide cofactor of the H protein. This chain is Probable glycine dehydrogenase (decarboxylating) subunit 2, found in Nitrosococcus oceani (strain ATCC 19707 / BCRC 17464 / JCM 30415 / NCIMB 11848 / C-107).